The primary structure comprises 160 residues: Cyclic pyranopterin monophosphate synthase (160 aa).

Substrate-binding positions include 75-77 (LCH) and 113-114 (ME). Asp-128 is an active-site residue.

The protein belongs to the MoaC family. In terms of assembly, homohexamer; trimer of dimers.

It catalyses the reaction (8S)-3',8-cyclo-7,8-dihydroguanosine 5'-triphosphate = cyclic pyranopterin phosphate + diphosphate. Its pathway is cofactor biosynthesis; molybdopterin biosynthesis. Its function is as follows. Catalyzes the conversion of (8S)-3',8-cyclo-7,8-dihydroguanosine 5'-triphosphate to cyclic pyranopterin monophosphate (cPMP). This is Cyclic pyranopterin monophosphate synthase from Ruthia magnifica subsp. Calyptogena magnifica.